A 468-amino-acid polypeptide reads, in one-letter code: Microtubule-associated tyrosine carboxypeptidase 1 (468 aa).

Positions 1 to 10 (MVLDSGTQVY) are enriched in polar residues. Disordered regions lie at residues 1–39 (MVLD…PPLY) and 77–112 (MKRS…TLRP). Zn(2+) is bound at residue His-277. The Nucleophile role is filled by Glu-278. The Zn(2+) site is built by His-282 and Glu-313.

Belongs to the peptidase MATCAP family. It depends on Zn(2+) as a cofactor.

The protein resides in the cytoplasm. The protein localises to the cytoskeleton. The enzyme catalyses C-terminal L-alpha-aminoacyl-L-glutamyl-L-glutamyl-L-tyrosyl-[tubulin] + H2O = C-terminal L-alpha-aminoacyl-L-glutamyl-L-glutamyl-[tubulin] + L-tyrosine. It catalyses the reaction C-terminal L-alpha-aminoacyl-L-glutamyl-L-glutamyl-L-phenylalanyl-[tubulin] + H2O = C-terminal L-alpha-aminoacyl-L-glutamyl-L-glutamyl-[tubulin] + L-phenylalanine. Tyrosine carboxypeptidase that removes the C-terminal tyrosine residue of alpha-tubulin, thereby regulating microtubule dynamics and function. Also able to remove the C-terminal phenylalanine residue of alpha-tubulin TUBA8. Recognizes adjacent tubulin dimers along the same protofilament. The polypeptide is Microtubule-associated tyrosine carboxypeptidase 1 (Rattus norvegicus (Rat)).